The sequence spans 120 residues: Putative 15 kDa capsid protein (120 aa).

It localises to the virion. The polypeptide is Putative 15 kDa capsid protein (P15) (Orgyia pseudotsugata (Douglas-fir tussock moth)).